A 249-amino-acid chain; its full sequence is DNA polymerase sliding clamp (249 aa).

The protein belongs to the PCNA family. As to quaternary structure, homotrimer. The subunits circularize to form a toroid; DNA passes through its center. Replication factor C (RFC) is required to load the toroid on the DNA.

Functionally, sliding clamp subunit that acts as a moving platform for DNA processing. Responsible for tethering the catalytic subunit of DNA polymerase and other proteins to DNA during high-speed replication. The polypeptide is DNA polymerase sliding clamp (Thermococcus sibiricus (strain DSM 12597 / MM 739)).